Here is a 306-residue protein sequence, read N- to C-terminus: UDP-3-O-acyl-N-acetylglucosamine deacetylase (306 aa).

Zn(2+) is bound by residues His-79, His-238, and Asp-242. His-265 (proton donor) is an active-site residue.

This sequence belongs to the LpxC family. Zn(2+) is required as a cofactor.

The catalysed reaction is a UDP-3-O-[(3R)-3-hydroxyacyl]-N-acetyl-alpha-D-glucosamine + H2O = a UDP-3-O-[(3R)-3-hydroxyacyl]-alpha-D-glucosamine + acetate. It functions in the pathway glycolipid biosynthesis; lipid IV(A) biosynthesis; lipid IV(A) from (3R)-3-hydroxytetradecanoyl-[acyl-carrier-protein] and UDP-N-acetyl-alpha-D-glucosamine: step 2/6. In terms of biological role, catalyzes the hydrolysis of UDP-3-O-myristoyl-N-acetylglucosamine to form UDP-3-O-myristoylglucosamine and acetate, the committed step in lipid A biosynthesis. The sequence is that of UDP-3-O-acyl-N-acetylglucosamine deacetylase from Shewanella sp. (strain ANA-3).